The chain runs to 322 residues: Sideroflexin-1 (322 aa).

The residue at position 2 (serine 2) is an N-acetylserine. Residues 2–102 lie on the Mitochondrial matrix side of the membrane; the sequence is SGELPPNINI…MSAQVPMNMT (101 aa). A helical transmembrane segment spans residues 103–120; sequence ITGCMMTFYRTTPAVLFW. The Mitochondrial intermembrane segment spans residues 121-146; sequence QWINQSFNAVVNYTNRSGDAPLTVNE. A helical membrane pass occupies residues 147 to 167; it reads LGTAYVSATTGAVATALGLNA. Over 168-174 the chain is Mitochondrial matrix; the sequence is LTKHVSP. A helical membrane pass occupies residues 175–195; the sequence is LIGRFVPFAAVAAANCINIPL. At 196–228 the chain is on the mitochondrial intermembrane side; that stretch reads MRQRELKVGIPVTDENGNRLGESANAAKQAITQ. A helical membrane pass occupies residues 229–249; sequence VVVSRILMAAPGMAIPPFIMN. Topologically, residues 250–266 are mitochondrial matrix; that stretch reads TLEKKAFLKRFPWMSAP. A helical transmembrane segment spans residues 267–287; sequence VQVGIVGFCLVFATPLCCALF. The Mitochondrial intermembrane portion of the chain corresponds to 288–322; sequence PQKSSMSVTSLEAELQARIRETYPELRRVYFNKGL.

Belongs to the sideroflexin family.

It localises to the mitochondrion inner membrane. The enzyme catalyses L-serine(in) = L-serine(out). It carries out the reaction L-alanine(in) = L-alanine(out). The catalysed reaction is L-cysteine(in) = L-cysteine(out). Amino acid transporter importing serine, an essential substrate of the mitochondrial branch of the one-carbon pathway, into mitochondria. Mitochondrial serine is then converted to glycine and formate, which exits to the cytosol where it is used to generate the charged folates that serve as one-carbon donors. May also transport other amino acids including alanine and cysteine. This chain is Sideroflexin-1 (SFXN1), found in Bos taurus (Bovine).